A 786-amino-acid chain; its full sequence is MLERTLRVLEYNKVKEQLLEHTASSLGRDKVKNLVPSTDFEEIVEMQDTTDEAAKVIRLKGSAPLGGITDIRSNVKRAKIGSMLSPNELLDIANTMYGSRNMKRFIEDMVDNGVELPILATHVAQIVSLYDLEKKITNCIGDGGEVVDSASDKLRGIRTQIRTAESRIREKLENMTRSSNAQKMLSDSIVTIRNERYVIPVKQEYRGVYGGIVHDQSASGQTLFIEPQVIVELNNALQEARVKEKQEIERILLMLTEEVAVEADIVLSNVEVVANLDFIFAKAFYAKRIKATKPIVNNERYMDLKQARHPLIDPEIIVPNNIMLGKDFTTIVITGPNTGGKTVTLKTVGICVLMAQSGLHIPVMDESEICVFKNIFADIGDEQSIEQSLSTFSSHMVNIVDILEKADFESLVLFDELGAGTDPQEGAALAISILDEVCNRGARVVATTHYPELKAYGYNREQVINASVEFDVNTLSPTYKLLIGVPGRSNAFEISKRLGLSDRVIEQARNHISTDTNKIENMIAKLEESQKNAERDWNEAEALRKQSEKLHRELQRQIIEFNEERDERLLKAQKEGEEKVEAAKKEAEGIIQELRQLRKAQLANVKDHELIEAKSRLEGAAPELVKKQKVNVKNTAPKQQLRAGDEVKVLTFGQKGQLLEKVSDTEWSVQIGILKMKVKESNMEYINTPKQTEKKAVATVKGRDYHVSLELDLRGERFENAMARVEKYLDDAQLASYPRVSIIHGKGTGALRQGVQDYLKKHRGVKTFRYGDMGEGGLGVTVVELK.

ATP is bound at residue 335 to 342; the sequence is GPNTGGKT. Positions 711-786 constitute a Smr domain; it reads LDLRGERFEN…GLGVTVVELK (76 aa).

The protein belongs to the DNA mismatch repair MutS family. MutS2 subfamily. Homodimer. Binds to stalled ribosomes, contacting rRNA.

Functionally, endonuclease that is involved in the suppression of homologous recombination and thus may have a key role in the control of bacterial genetic diversity. Its function is as follows. Acts as a ribosome collision sensor, splitting the ribosome into its 2 subunits. Detects stalled/collided 70S ribosomes which it binds and splits by an ATP-hydrolysis driven conformational change. Acts upstream of the ribosome quality control system (RQC), a ribosome-associated complex that mediates the extraction of incompletely synthesized nascent chains from stalled ribosomes and their subsequent degradation. Probably generates substrates for RQC. The polypeptide is Endonuclease MutS2 (Bacillus cereus (strain Q1)).